The following is a 264-amino-acid chain: Thymidylate synthase (264 aa).

Position 21 (Arg-21) interacts with dUMP. Position 51 (His-51) interacts with (6R)-5,10-methylene-5,6,7,8-tetrahydrofolate. 126-127 (RR) lines the dUMP pocket. Cys-146 functions as the Nucleophile in the catalytic mechanism. DUMP contacts are provided by residues 166 to 169 (RSAD), Asn-177, and 207 to 209 (HLY). Asp-169 provides a ligand contact to (6R)-5,10-methylene-5,6,7,8-tetrahydrofolate. Ala-263 serves as a coordination point for (6R)-5,10-methylene-5,6,7,8-tetrahydrofolate.

This sequence belongs to the thymidylate synthase family. Bacterial-type ThyA subfamily. As to quaternary structure, homodimer.

The protein localises to the cytoplasm. It catalyses the reaction dUMP + (6R)-5,10-methylene-5,6,7,8-tetrahydrofolate = 7,8-dihydrofolate + dTMP. Its pathway is pyrimidine metabolism; dTTP biosynthesis. Functionally, catalyzes the reductive methylation of 2'-deoxyuridine-5'-monophosphate (dUMP) to 2'-deoxythymidine-5'-monophosphate (dTMP) while utilizing 5,10-methylenetetrahydrofolate (mTHF) as the methyl donor and reductant in the reaction, yielding dihydrofolate (DHF) as a by-product. This enzymatic reaction provides an intracellular de novo source of dTMP, an essential precursor for DNA biosynthesis. The chain is Thymidylate synthase from Pseudomonas aeruginosa (strain LESB58).